The following is a 222-amino-acid chain: MKSINILSFLLLSSTLSLVAFARSFTSENPIVLPTTCHDDDNLVLPEVYDQDGNPLRIGERYIINNPLLGAGAVYLYNIGNLQCPNAVLQHMSIPQFLGEGTPVVFVRKSESDYGDVVRVMTVVYIKFFVKTTKLCVDQTVWKVNDEQLVVTGGKVGNENDIFKIMKTDLVTPGGSKYVYKLLHCPSHLGCKNIGGNFKNGYPRLVTVDDDKDFIPFVFIKA.

The signal sequence occupies residues 1–26; that stretch reads MKSINILSFLLLSSTLSLVAFARSFT. Residues 27-42 constitute a propeptide that is removed on maturation; the sequence is SENPIVLPTTCHDDDN. The Vacuolar targeting signal signature appears at 29-34; it reads NPIVLP. Intrachain disulfides connect C84-C136 and C185-C191.

It belongs to the protease inhibitor I3 (leguminous Kunitz-type inhibitor) family. Tubers, leaves.

The protein resides in the vacuole. Its function is as follows. Potent inhibitor of cathepsin l (cysteine protease). Does not inhibit trypsin or chymotrypsin (serine proteases). May protect the plant by inhibiting proteases of invading organisms. In Solanum tuberosum (Potato), this protein is Cysteine protease inhibitor 1.